Reading from the N-terminus, the 354-residue chain is Guanine nucleotide-binding protein G(o) subunit alpha (354 aa).

Gly-2 carries N-myristoyl glycine lipidation. A lipid anchor (S-palmitoyl cysteine) is attached at Cys-3. In terms of domain architecture, G-alpha spans 32-354 (KDIKLLLLGA…ANNLRGCGLY (323 aa)). The tract at residues 35–48 (KLLLLGAGESGKST) is G1 motif. GTP-binding positions include 40-47 (GAGESGKS), 176-182 (LRTRVKT), 201-205 (DVGGQ), 270-273 (NKKD), and Ala-326. The Mg(2+) site is built by Ser-47 and Thr-182. The segment at 174-182 (DILRTRVKT) is G2 motif. The interval 197–206 (FKLFDVGGQR) is G3 motif. The interval 266–273 (ILFLNKKD) is G4 motif. A G5 motif region spans residues 324-329 (TCATDT).

The protein belongs to the G-alpha family. G(i/o/t/z) subfamily. As to quaternary structure, g proteins are composed of 3 units; alpha, beta and gamma. The alpha chain contains the guanine nucleotide binding site.

Guanine nucleotide-binding proteins (G proteins) are involved as modulators or transducers in various transmembrane signaling systems. The G(o) protein function is not clear. This chain is Guanine nucleotide-binding protein G(o) subunit alpha, found in Lymnaea stagnalis (Great pond snail).